The chain runs to 193 residues: Surfactant protein C (193 aa).

The propeptide occupies methionine 1–glutamine 23. 2 S-palmitoyl cysteine lipidation sites follow: cysteine 28 and cysteine 29. Positions histidine 59–isoleucine 193 are excised as a propeptide. One can recognise a BRICHOS domain in the interval phenylalanine 94–isoleucine 193. Residues cysteine 121 and cysteine 185 are joined by a disulfide bond. The disordered stretch occupies residues lysine 147–serine 170.

Its subcellular location is the secreted. It is found in the extracellular space. The protein resides in the surface film. Functionally, pulmonary surfactant associated proteins promote alveolar stability by lowering the surface tension at the air-liquid interface in the peripheral air spaces. The sequence is that of Surfactant protein C from Mus musculus (Mouse).